Here is a 409-residue protein sequence, read N- to C-terminus: Casein kinase II subunit alpha-1 (409 aa).

The first 35 residues, 1–35 (MIDTLFFLFFLFFDSPLRRLLLLCAVLALRAPTAH), serve as a signal peptide directing secretion. Asn72 carries N-linked (GlcNAc...) asparagine glycosylation. The region spanning 110-395 (YEVVRKVGRG…AKEAMAHAYF (286 aa)) is the Protein kinase domain. Residues 116 to 124 (VGRGKYSEV) and Lys139 contribute to the ATP site. The N-linked (GlcNAc...) asparagine glycan is linked to Asn188. The active-site Proton acceptor is Asp227.

This sequence belongs to the protein kinase superfamily. Ser/Thr protein kinase family. CK2 subfamily. Heterotetramer of two catalytic alpha subunits and two regulatory beta subunits. As to expression, seems to be present in all plant organs. But seems to be less expressed than CKA2.

It localises to the nucleus. It is found in the nucleolus. It catalyses the reaction L-seryl-[protein] + ATP = O-phospho-L-seryl-[protein] + ADP + H(+). The enzyme catalyses L-threonyl-[protein] + ATP = O-phospho-L-threonyl-[protein] + ADP + H(+). With respect to regulation, inhibited by heparin. In terms of biological role, casein kinases are operationally defined by their preferential utilization of acidic proteins such as caseins as substrates. Phosphorylates casein in vitro. The alpha chain contains the catalytic site. The tetrameric holoenzyme CK2, composed of two alpha and two beta subunits, phosphorylates the transcription factor GBFl, resulting in stimulation of its DNA binding activity. CK2 phosphorylates the transcription factor PIF1 after an exposure to light, resulting in a proteasome-dependent degradation of PIF1 and promotion of photomorphogenesis. CK2 phosphorylates translation initiation factors. May participate in the regulation of the initiation of translation. Acts as a circadian clock component that maintains the correct period length through phosphorylation of CCA1. Required for the maintenance and control of genomic stability and chromatin structure. May act as an ectokinase that phosphorylates several extracellular proteins. In Arabidopsis thaliana (Mouse-ear cress), this protein is Casein kinase II subunit alpha-1.